A 315-amino-acid chain; its full sequence is Glucokinase-like protein CC_3167 (315 aa).

The protein belongs to the bacterial glucokinase family.

In Caulobacter vibrioides (strain ATCC 19089 / CIP 103742 / CB 15) (Caulobacter crescentus), this protein is Glucokinase-like protein CC_3167.